The sequence spans 248 residues: 5'-nucleotidase SurE (248 aa).

Positions 8, 9, 39, and 91 each coordinate a divalent metal cation.

Belongs to the SurE nucleotidase family. A divalent metal cation serves as cofactor.

Its subcellular location is the cytoplasm. It catalyses the reaction a ribonucleoside 5'-phosphate + H2O = a ribonucleoside + phosphate. Nucleotidase that shows phosphatase activity on nucleoside 5'-monophosphates. This Citrifermentans bemidjiense (strain ATCC BAA-1014 / DSM 16622 / JCM 12645 / Bem) (Geobacter bemidjiensis) protein is 5'-nucleotidase SurE.